We begin with the raw amino-acid sequence, 232 residues long: MDAREMKIKAAEAALAHVEDGMRLGIGTGSTAEEFVRLLAEKVAGGFRVEGVPTSERTARLCVELGVPLKSLDELPALDLTVDGADEVDPALRLIKGGGGALLREKIVAAASERMIVIADESKLVDTLGAYALPIEVNPFGLVSTRIAIEKVAARLGLSGELSLRQSGDGEFTTDGGHHIIDASFGRIPDAEALSSELNSIPGVVEHGLFINMAALAIIAGPAGARTLQANR.

Residues 28 to 31 (TGST), 83 to 86 (DGAD), and 96 to 99 (KGGG) each bind substrate. Glutamate 105 functions as the Proton acceptor in the catalytic mechanism. A substrate-binding site is contributed by lysine 123.

It belongs to the ribose 5-phosphate isomerase family. In terms of assembly, homodimer.

It catalyses the reaction aldehydo-D-ribose 5-phosphate = D-ribulose 5-phosphate. The protein operates within carbohydrate degradation; pentose phosphate pathway; D-ribose 5-phosphate from D-ribulose 5-phosphate (non-oxidative stage): step 1/1. Functionally, catalyzes the reversible conversion of ribose-5-phosphate to ribulose 5-phosphate. This Rhizobium etli (strain CIAT 652) protein is Ribose-5-phosphate isomerase A.